Here is a 573-residue protein sequence, read N- to C-terminus: Protein translocase subunit SecD (573 aa).

A helical transmembrane segment spans residues 13 to 33 (YLSVFLVMLIGIYLLVFFTGD). Residues 127 to 200 (AQPAAEEPQP…PPAEAPATDP (74 aa)) form a disordered region. Composition is skewed to pro residues over residues 135–154 (QPAP…PPPA) and 161–194 (SPQP…PPAE). Helical transmembrane passes span 385-405 (AGMI…LLYY), 410-430 (LLTA…LVLL), 441-461 (AGIA…VVFF), 489-509 (IVSG…LAIG), and 514-534 (FAFT…LVTW).

It belongs to the SecD/SecF family. SecD subfamily. Forms a complex with SecF. Part of the essential Sec protein translocation apparatus which comprises SecA, SecYEG and auxiliary proteins SecDF. Other proteins may also be involved.

It localises to the cell membrane. Functionally, part of the Sec protein translocase complex. Interacts with the SecYEG preprotein conducting channel. SecDF uses the proton motive force (PMF) to complete protein translocation after the ATP-dependent function of SecA. This chain is Protein translocase subunit SecD, found in Mycobacterium tuberculosis (strain CDC 1551 / Oshkosh).